The sequence spans 184 residues: Photosystem I assembly protein Ycf4 (184 aa).

Helical transmembrane passes span 22 to 42 and 57 to 77; these read FFWA…GTSS and IIFF…LFIS.

This sequence belongs to the Ycf4 family.

The protein resides in the plastid. Its subcellular location is the chloroplast thylakoid membrane. Its function is as follows. Seems to be required for the assembly of the photosystem I complex. The polypeptide is Photosystem I assembly protein Ycf4 (Aethionema cordifolium (Lebanon stonecress)).